A 284-amino-acid chain; its full sequence is Halorhodopsin (284 aa).

The Extracellular portion of the chain corresponds to 1-30 (MIETAAADILAGGMVPLEMTQTQIFEAVQS). The chain crosses the membrane as a helical span at residues 31–56 (DTLLASSLWINIALAGLSILLFVYMG). The Cytoplasmic portion of the chain corresponds to 57–62 (RNVEDP). The helical transmembrane segment at 63 to 86 (RAQLIFVATLMVPLVSISSYTGLV) threads the bilayer. Residues 87–110 (SGLTVSFLEMPAGHALAGQEVLTP) are Extracellular-facing. Residues 111-132 (WGRYLTWALSTPMILIAVGLLA) form a helical membrane-spanning segment. The Cytoplasmic segment spans residues 133 to 135 (GSN). Residues 136–159 (TTKLFTAVVADIGMCVTGLAAALT) traverse the membrane as a helical segment. The Extracellular portion of the chain corresponds to 160–162 (TSS). The chain crosses the membrane as a helical span at residues 163 to 185 (YLLRWVWYAISCAFFVVVLYILL). At 186–197 (AEWAEDAEIAGT) the chain is on the cytoplasmic side. The helical transmembrane segment at 198 to 221 (ADIFNTLKVLTVVLWLGYPIFWAL) threads the bilayer. Over 222 to 230 (GAEGLAVLD) the chain is Extracellular. The chain crosses the membrane as a helical span at residues 231–259 (VAITSWAYSGMDIVAKYLFAFLLLRWVVN). K246 bears the N6-(retinylidene)lysine mark. At 260 to 284 (NERTVADVASGLGSGSRGGAAPADD) the chain is on the cytoplasmic side.

Belongs to the archaeal/bacterial/fungal opsin family.

It is found in the cell membrane. Light-driven chloride pump. The protein is Halorhodopsin (hop) of Halobacterium sp. (strain SG1).